The following is a 153-amino-acid chain: Ribosomal RNA large subunit methyltransferase H (153 aa).

S-adenosyl-L-methionine is bound by residues Leu75, Gly102, and 121 to 126; that span reads LSPLTM.

Belongs to the RNA methyltransferase RlmH family. Homodimer.

The protein resides in the cytoplasm. The catalysed reaction is pseudouridine(1915) in 23S rRNA + S-adenosyl-L-methionine = N(3)-methylpseudouridine(1915) in 23S rRNA + S-adenosyl-L-homocysteine + H(+). Its function is as follows. Specifically methylates the pseudouridine at position 1915 (m3Psi1915) in 23S rRNA. This chain is Ribosomal RNA large subunit methyltransferase H, found in Nitratiruptor sp. (strain SB155-2).